A 413-amino-acid chain; its full sequence is Arogenate dehydratase/prephenate dehydratase 6, chloroplastic (413 aa).

The transit peptide at 1–44 (MKALSSSSPILGASQPATATALIARSGRSEWQSSCAILTSKVIS) directs the protein to the chloroplast. Residues 117–294 (RVAYQGVPGA…NVTRFVMLAR (178 aa)) enclose the Prephenate dehydratase domain. The 92-residue stretch at 308–399 (SIVFAHEKGT…SFLRVLGSYP (92 aa)) folds into the ACT domain.

Expressed in roots, leaves, stems, flowers and siliques.

It is found in the plastid. The protein resides in the chloroplast stroma. The enzyme catalyses L-arogenate + H(+) = L-phenylalanine + CO2 + H2O. The catalysed reaction is prephenate + H(+) = 3-phenylpyruvate + CO2 + H2O. The protein operates within amino-acid biosynthesis; L-phenylalanine biosynthesis; L-phenylalanine from L-arogenate: step 1/1. Its pathway is amino-acid biosynthesis; L-phenylalanine biosynthesis; phenylpyruvate from prephenate: step 1/1. Its function is as follows. Converts the prephenate produced from the shikimate-chorismate pathway into phenylalanine. Dehydratase that uses arogenate and prephenate as substrates. Utilzes more efficiently arogenate than prephenate. In Arabidopsis thaliana (Mouse-ear cress), this protein is Arogenate dehydratase/prephenate dehydratase 6, chloroplastic.